Reading from the N-terminus, the 299-residue chain is Protease HtpX homolog (299 aa).

A run of 2 helical transmembrane segments spans residues 15–35 and 37–57; these read MFLTMFLLAALYLFFLAVLWQ and GVSYTGIIVFVAIMLGVQYYF. Zn(2+) is bound at residue histidine 140. The active site involves glutamate 141. Histidine 144 serves as a coordination point for Zn(2+). A run of 2 helical transmembrane segments spans residues 158–178 and 187–207; these read FFATVASFIVQNFFYWGGAFG and NNIMLVYLASLVVWLVSYFLI. Residue glutamate 215 coordinates Zn(2+).

It belongs to the peptidase M48B family. Requires Zn(2+) as cofactor.

The protein resides in the cell membrane. The protein is Protease HtpX homolog of Moorella thermoacetica (strain ATCC 39073 / JCM 9320).